Reading from the N-terminus, the 170-residue chain is tRNA-splicing endonuclease (170 aa).

Active-site residues include Tyr-106, His-116, and Lys-147.

The protein belongs to the tRNA-intron endonuclease family. Archaeal short subfamily. In terms of assembly, homotetramer; although the tetramer contains four active sites, only two participate in the cleavage. Therefore, it should be considered as a dimer of dimers.

The catalysed reaction is pretRNA = a 3'-half-tRNA molecule with a 5'-OH end + a 5'-half-tRNA molecule with a 2',3'-cyclic phosphate end + an intron with a 2',3'-cyclic phosphate and a 5'-hydroxyl terminus.. Endonuclease that removes tRNA introns. Cleaves pre-tRNA at the 5'- and 3'-splice sites to release the intron. The products are an intron and two tRNA half-molecules bearing 2',3' cyclic phosphate and 5'-OH termini. Recognizes a pseudosymmetric substrate in which 2 bulged loops of 3 bases are separated by a stem of 4 bp. The sequence is that of tRNA-splicing endonuclease from Methanothermobacter thermautotrophicus (strain ATCC 29096 / DSM 1053 / JCM 10044 / NBRC 100330 / Delta H) (Methanobacterium thermoautotrophicum).